The chain runs to 729 residues: Pentatricopeptide repeat-containing protein At5g01110 (729 aa).

The disordered stretch occupies residues 26–45 (TSSSPVFEPSSSSSSSSSSA). The segment covering 27–45 (SSSPVFEPSSSSSSSSSSA) has biased composition (low complexity). PPR repeat units follow at residues 112–147 (TSLSLSAMIHILVRSGRLSDAQSCLLRMIRRSGVSR), 164–198 (NDSVFDLLIRTYVQARKLREAHEAFTLLRSKGFTV), 199–233 (SIDACNALIGSLVRIGWVELAWGVYQEISRSGVGI), 234–268 (NVYTLNIMVNALCKDGKMEKVGTFLSQVQEKGVYP), 269–303 (DIVTYNTLISAYSSKGLMEEAFELMNAMPGKGFSP), 304–338 (GVYTYNTVINGLCKHGKYERAKEVFAEMLRSGLSP), 339–373 (DSTTYRSLLMEACKKGDVVETEKVFSDMRSRDVVP), 374–408 (DLVCFSSMMSLFTRSGNLDKALMYFNSVKEAGLIP), 409–443 (DNVIYTILIQGYCRKGMISVAMNLRNEMLQQGCAM), 444–478 (DVVTYNTILHGLCKRKMLGEADKLFNEMTERALFP), 479–513 (DSYTLTILIDGHCKLGNLQNAMELFQKMKEKRIRL), 514–548 (DVVTYNTLLDGFGKVGDIDTAKEIWADMVSKEILP), 549–583 (TPISYSILVNALCSKGHLAEAFRVWDEMISKNIKP), 584–618 (TVMICNSMIKGYCRSGNASDGESFLEKMISEGFVP), 619–649 (DCISYNTLIYGFVREENMSKAFGLVKKMEEE), 656–690 (DVFTYNSILHGFCRQNQMKEAEVVLRKMIERGVNP), and 691–725 (DRSTYTCMINGFVSQDNLTEAFRIHDEMLQRGFSP).

Belongs to the PPR family. P subfamily.

This Arabidopsis thaliana (Mouse-ear cress) protein is Pentatricopeptide repeat-containing protein At5g01110.